The sequence spans 327 residues: GMP reductase (327 aa).

The active-site Thioimidate intermediate is the C176. 205 to 228 (IIADGGIRTHGDIAKSIRFGASMV) lines the NADP(+) pocket.

This sequence belongs to the IMPDH/GMPR family. GuaC type 2 subfamily.

It carries out the reaction IMP + NH4(+) + NADP(+) = GMP + NADPH + 2 H(+). Its function is as follows. Catalyzes the irreversible NADPH-dependent deamination of GMP to IMP. It functions in the conversion of nucleobase, nucleoside and nucleotide derivatives of G to A nucleotides, and in maintaining the intracellular balance of A and G nucleotides. The sequence is that of GMP reductase from Streptococcus pyogenes serotype M1.